We begin with the raw amino-acid sequence, 589 residues long: MKTGAQVWRALAKSCLLCAALGCLHLPGARGEKPDFFETNAVNGSLVRSRPVRSVDVTPAPTDCQLSTWSSWTACDPCQKKRYRHTYLLRPSQFYGELCDFSDKEVEDCVTNRACRSQVRCEGFVCAQTGRCVNRRLLCNGDNDCGDQSDEANCRRIYKKCSQDMEQYWAIGNLASGINLFTNTFEGPVLDHRYYAGACSPHYILNTNFRKPYNVESYTPQTQGKYEFALTEYESYFDFEHNVTEKATSKSSFKFGFKLDGLVEFGVRKESNEGRHYISRTKRFSHTKSKFLHARSVLEVAHYKLKSRQLMLHYEFLQRVKSLPLEYSYGEYRDLLRDFGTHFITEAVLGGIYEYTLIMNKDAMERGDYTLDHVSACAGGGFQIGGNVYKVYLKLGVSEKKCSDILNEIKDRNKRRTMVEDLVVLVRGGTSEYITSLAYKDLPTAELMKEWGDAVQYNPAIIKLKAEPLYELVTATDFAYSSTVKQNMKKALEEFQMEVSSCRCAPCRNNGVPILKESRCECICPAGFQGVACEVTNRKDIPIDGKWSCWSDWSPCSGGRKTRQRQCNNPAPQRGGSPCSGPASETLDC.

The N-terminal stretch at 1–31 is a signal peptide; the sequence is MKTGAQVWRALAKSCLLCAALGCLHLPGARG. The propeptide occupies 32 to 53; sequence EKPDFFETNAVNGSLVRSRPVR. N-linked (GlcNAc...) asparagine glycosylation occurs at Asn-43. Residues 63-116 form the TSP type-1 1 domain; it reads DCQLSTWSSWTACDPCQKKRYRHTYLLRPSQFYGELCDFSDKEVEDCVTNRACR. Intrachain disulfides connect Cys-64–Cys-99, Cys-75–Cys-109, Cys-78–Cys-115, Cys-121–Cys-132, Cys-126–Cys-145, Cys-139–Cys-154, and Cys-161–Cys-199. C-linked (Man) tryptophan glycans are attached at residues Trp-69 and Trp-72. The region spanning 120-155 is the LDL-receptor class A domain; the sequence is RCEGFVCAQTGRCVNRRLLCNGDNDCGDQSDEANCR. Residues Leu-137, Asn-140, Asp-142, Asp-144, Asp-150, and Glu-151 each coordinate Ca(2+). An MACPF domain is found at 157 to 503; it reads IYKKCSQDME…EFQMEVSSCR (347 aa). N-linked (GlcNAc...) asparagine glycosylation is present at Asn-242. A run of 4 beta stranded transmembrane segments spans residues 251-258, 261-268, 378-385, and 391-398; these read SSFKFGFK, GLVEFGVR, AGGGFQIG, and VYLKLGVS. A disulfide bond links Cys-377 and Cys-402. Thr-417 bears the Phosphothreonine mark. Disulfide bonds link Cys-502-Cys-549, Cys-504-Cys-520, Cys-507-Cys-522, and Cys-524-Cys-533. The EGF-like domain maps to 504 to 534; that stretch reads CAPCRNNGVPILKESRCECICPAGFQGVACE. A TSP type-1 2 domain is found at 544–587; the sequence is DGKWSCWSDWSPCSGGRKTRQRQCNNPAPQRGGSPCSGPASETL. Trp-550 and Trp-553 each carry a C-linked (Man) tryptophan glycan. Cys-556 and Cys-589 are joined by a disulfide. The segment at 556-589 is disordered; that stretch reads CSGGRKTRQRQCNNPAPQRGGSPCSGPASETLDC.

This sequence belongs to the complement C6/C7/C8/C9 family. As to quaternary structure, heterotrimer of 3 chains: alpha (C8A), beta (C8B) and gamma (C8G); the alpha and gamma chains are disulfide bonded. Component of the membrane attack complex (MAC), composed of complement C5b, C6, C7, C8A, C8B, C8G and multiple copies of the pore-forming subunit C9. N-glycosylated; contains one or two bound glycans. Not O-glycosylated.

The protein localises to the secreted. It localises to the target cell membrane. With respect to regulation, membrane attack complex (MAC) assembly is inhibited by CD59, thereby protecting self-cells from damage during complement activation. CD59 acts by binding to the beta-haipins of C8 (C8A and C8B), forming an intermolecular beta-sheet that prevents incorporation of the multiple copies of C9 required for complete formation of the osmolytic pore. MAC assembly is also inhibited by clusterin (CLU) chaperones that inhibit polymerization of C9. In terms of biological role, component of the membrane attack complex (MAC), a multiprotein complex activated by the complement cascade, which inserts into a target cell membrane and forms a pore, leading to target cell membrane rupture and cell lysis. The MAC is initiated by proteolytic cleavage of C5 into complement C5b in response to the classical, alternative, lectin and GZMK complement pathways. The complement pathways consist in a cascade of proteins that leads to phagocytosis and breakdown of pathogens and signaling that strengthens the adaptive immune system. C8B, together with C8A and C8G, inserts into the target membrane, but does not form pores by itself. During MAC assembly, associates with C5b, C6 and C7 to form the C5b8 intermediate complex that inserts into the target membrane and traverses the bilayer increasing membrane rigidity. In Rattus norvegicus (Rat), this protein is Complement component C8 beta chain (C8b).